Consider the following 104-residue polypeptide: Class I hydrophobin 4 (104 aa).

Residues 1-16 (MFASTVFVSLLAVAAA) form the signal peptide. 4 disulfides stabilise this stretch: C26–C85, C34–C79, C35–C61, and C86–C99.

Belongs to the fungal hydrophobin family. Self-assembles to form functional amyloid fibrils called rodlets. Self-assembly into fibrillar rodlets occurs spontaneously at hydrophobic:hydrophilic interfaces and the rodlets further associate laterally to form amphipathic monolayers.

The protein resides in the secreted. Its subcellular location is the cell wall. Functionally, aerial growth, conidiation, and dispersal of filamentous fungi in the environment rely upon a capability of their secreting small amphipathic proteins called hydrophobins (HPBs) with low sequence identity. Class I can self-assemble into an outermost layer of rodlet bundles on aerial cell surfaces, conferring cellular hydrophobicity that supports fungal growth, development and dispersal; whereas Class II form highly ordered films at water-air interfaces through intermolecular interactions but contribute nothing to the rodlet structure. HYD4 is a class I hydrophobin that negatively regulates aerial mycelial growth, conidiation, carotenoid and adenosine synthesis, resistance to oxidant stress, and fruiting body development. Seems not to be involved in the mycelial growth rate, the hydrophobicity of the mycelia and conidia, nor the conidial virulence on silkworm pupae. This is Class I hydrophobin 4 from Cordyceps militaris (Caterpillar fungus).